We begin with the raw amino-acid sequence, 365 residues long: Caffeic acid 3-O-methyltransferase (365 aa).

Residue 130 to 136 (MNQDKVL) coordinates substrate. Positions 162–180 (AFDYHGTDPRFNKVFNKGM) are substrate binding. Residues Gly-208, Asp-231, Asp-251, Met-252, and Lys-265 each coordinate S-adenosyl-L-methionine. His-269 serves as the catalytic Proton acceptor.

It belongs to the class I-like SAM-binding methyltransferase superfamily. Cation-independent O-methyltransferase family. COMT subfamily. In terms of assembly, homodimer.

It carries out the reaction (E)-caffeate + S-adenosyl-L-methionine = (E)-ferulate + S-adenosyl-L-homocysteine + H(+). It participates in aromatic compound metabolism; phenylpropanoid biosynthesis. In terms of biological role, catalyzes the conversion of caffeic acid to ferulic acid and of 5-hydroxyferulic acid to sinapic acid. The resulting products may subsequently be converted to the corresponding alcohols that are incorporated into lignins. This chain is Caffeic acid 3-O-methyltransferase (COMT1), found in Rosa chinensis (China rose).